The sequence spans 67 residues: ATP synthase F(0) complex subunit 8 (67 aa).

Residues 8-24 (TWFIMIFSMFLTLFILF) form a helical membrane-spanning segment. N6-acetyllysine; alternate is present on lysine 54. Lysine 54 is modified (N6-succinyllysine; alternate). Lysine 57 carries the post-translational modification N6-acetyllysine.

It belongs to the ATPase protein 8 family. As to quaternary structure, component of the ATP synthase complex composed at least of ATP5F1A/subunit alpha, ATP5F1B/subunit beta, ATP5MC1/subunit c (homooctomer), MT-ATP6/subunit a, MT-ATP8/subunit 8, ATP5ME/subunit e, ATP5MF/subunit f, ATP5MG/subunit g, ATP5MK/subunit k, ATP5MJ/subunit j, ATP5F1C/subunit gamma, ATP5F1D/subunit delta, ATP5F1E/subunit epsilon, ATP5PF/subunit F6, ATP5PB/subunit b, ATP5PD/subunit d, ATP5PO/subunit OSCP. ATP synthase complex consists of a soluble F(1) head domain (subunits alpha(3) and beta(3)) - the catalytic core - and a membrane F(0) domain - the membrane proton channel (subunits c, a, 8, e, f, g, k and j). These two domains are linked by a central stalk (subunits gamma, delta, and epsilon) rotating inside the F1 region and a stationary peripheral stalk (subunits F6, b, d, and OSCP). Interacts with PRICKLE3.

Its subcellular location is the mitochondrion membrane. Its function is as follows. Subunit 8, of the mitochondrial membrane ATP synthase complex (F(1)F(0) ATP synthase or Complex V) that produces ATP from ADP in the presence of a proton gradient across the membrane which is generated by electron transport complexes of the respiratory chain. ATP synthase complex consist of a soluble F(1) head domain - the catalytic core - and a membrane F(1) domain - the membrane proton channel. These two domains are linked by a central stalk rotating inside the F(1) region and a stationary peripheral stalk. During catalysis, ATP synthesis in the catalytic domain of F(1) is coupled via a rotary mechanism of the central stalk subunits to proton translocation. In vivo, can only synthesize ATP although its ATP hydrolase activity can be activated artificially in vitro. Part of the complex F(0) domain. This Canis lupus familiaris (Dog) protein is ATP synthase F(0) complex subunit 8.